Here is a 216-residue protein sequence, read N- to C-terminus: Adenylate kinase (216 aa).

10–15 (GAGKGT) lines the ATP pocket. The segment at 30 to 59 (STGDMLRAAVKAGTKLGQQVQGIMAAGKLV) is NMP. AMP is bound by residues threonine 31, arginine 36, 57–59 (KLV), 85–88 (GFPR), and glutamine 92. The tract at residues 122–159 (GRRVHMPSGRIYHLKFNPPKITDKDDMTGESLTLRKDD) is LID. ATP is bound by residues arginine 123 and 132–133 (IY). Residues arginine 156 and arginine 167 each coordinate AMP. Arginine 200 lines the ATP pocket.

This sequence belongs to the adenylate kinase family. Monomer.

It is found in the cytoplasm. The enzyme catalyses AMP + ATP = 2 ADP. The protein operates within purine metabolism; AMP biosynthesis via salvage pathway; AMP from ADP: step 1/1. Its function is as follows. Catalyzes the reversible transfer of the terminal phosphate group between ATP and AMP. Plays an important role in cellular energy homeostasis and in adenine nucleotide metabolism. This Hamiltonella defensa subsp. Acyrthosiphon pisum (strain 5AT) protein is Adenylate kinase.